The following is a 262-amino-acid chain: Acyl-[acyl-carrier-protein]--UDP-N-acetylglucosamine O-acyltransferase (262 aa).

It belongs to the transferase hexapeptide repeat family. LpxA subfamily. Homotrimer.

The protein localises to the cytoplasm. It carries out the reaction a (3R)-hydroxyacyl-[ACP] + UDP-N-acetyl-alpha-D-glucosamine = a UDP-3-O-[(3R)-3-hydroxyacyl]-N-acetyl-alpha-D-glucosamine + holo-[ACP]. It functions in the pathway glycolipid biosynthesis; lipid IV(A) biosynthesis; lipid IV(A) from (3R)-3-hydroxytetradecanoyl-[acyl-carrier-protein] and UDP-N-acetyl-alpha-D-glucosamine: step 1/6. Involved in the biosynthesis of lipid A, a phosphorylated glycolipid that anchors the lipopolysaccharide to the outer membrane of the cell. The polypeptide is Acyl-[acyl-carrier-protein]--UDP-N-acetylglucosamine O-acyltransferase (Aliivibrio fischeri (strain ATCC 700601 / ES114) (Vibrio fischeri)).